A 98-amino-acid chain; its full sequence is Acylphosphatase (98 aa).

Residues Thr-12–Gln-98 enclose the Acylphosphatase-like domain. Active-site residues include Arg-27 and Asn-45.

The protein belongs to the acylphosphatase family.

It carries out the reaction an acyl phosphate + H2O = a carboxylate + phosphate + H(+). The sequence is that of Acylphosphatase (acyP) from Burkholderia lata (strain ATCC 17760 / DSM 23089 / LMG 22485 / NCIMB 9086 / R18194 / 383).